Reading from the N-terminus, the 260-residue chain is Peptidase inhibitor 15-A (260 aa).

The first 21 residues, 1–21 (MNENRLAIDILLLCISCGASA), serve as a signal peptide directing secretion. Positions 22-62 (LAGFSPTASSSLPATNLTDIGFAPPKYLTEAANIPKTRRKR) are excised as a propeptide. Residues Asn37 and Asn126 are each glycosylated (N-linked (GlcNAc...) asparagine). The region spanning 73–213 (LDYHNKVRGK…KRATYLVCNY (141 aa)) is the SCP domain.

Belongs to the CRISP family.

It localises to the secreted. Its function is as follows. Serine protease inhibitor which displays weak inhibitory activity against trypsin. May play a role in facial patterning during embryonic development. The chain is Peptidase inhibitor 15-A (pi15a) from Danio rerio (Zebrafish).